Here is a 420-residue protein sequence, read N- to C-terminus: Serine hydroxymethyltransferase (420 aa).

(6S)-5,6,7,8-tetrahydrofolate-binding positions include leucine 121 and 125–127; that span reads GHL. Lysine 230 carries the N6-(pyridoxal phosphate)lysine modification. Residues glutamate 246 and 354-356 each bind (6S)-5,6,7,8-tetrahydrofolate; that span reads SPF.

It belongs to the SHMT family. As to quaternary structure, homodimer. Pyridoxal 5'-phosphate is required as a cofactor.

It localises to the cytoplasm. It catalyses the reaction (6R)-5,10-methylene-5,6,7,8-tetrahydrofolate + glycine + H2O = (6S)-5,6,7,8-tetrahydrofolate + L-serine. The protein operates within one-carbon metabolism; tetrahydrofolate interconversion. It functions in the pathway amino-acid biosynthesis; glycine biosynthesis; glycine from L-serine: step 1/1. In terms of biological role, catalyzes the reversible interconversion of serine and glycine with tetrahydrofolate (THF) serving as the one-carbon carrier. This reaction serves as the major source of one-carbon groups required for the biosynthesis of purines, thymidylate, methionine, and other important biomolecules. Also exhibits THF-independent aldolase activity toward beta-hydroxyamino acids, producing glycine and aldehydes, via a retro-aldol mechanism. The sequence is that of Serine hydroxymethyltransferase from Rickettsia massiliae (strain Mtu5).